We begin with the raw amino-acid sequence, 38 residues long: Photosystem II reaction center protein L (38 aa).

The helical transmembrane segment at 17-37 (SLYWGLLLIFVLAVLFSSYIF) threads the bilayer.

Belongs to the PsbL family. PSII is composed of 1 copy each of membrane proteins PsbA, PsbB, PsbC, PsbD, PsbE, PsbF, PsbH, PsbI, PsbJ, PsbK, PsbL, PsbM, PsbT, PsbX, PsbY, PsbZ, Psb30/Ycf12, at least 3 peripheral proteins of the oxygen-evolving complex and a large number of cofactors. It forms dimeric complexes.

Its subcellular location is the plastid. The protein resides in the chloroplast thylakoid membrane. One of the components of the core complex of photosystem II (PSII). PSII is a light-driven water:plastoquinone oxidoreductase that uses light energy to abstract electrons from H(2)O, generating O(2) and a proton gradient subsequently used for ATP formation. It consists of a core antenna complex that captures photons, and an electron transfer chain that converts photonic excitation into a charge separation. This subunit is found at the monomer-monomer interface and is required for correct PSII assembly and/or dimerization. This Tetradesmus obliquus (Green alga) protein is Photosystem II reaction center protein L.